The sequence spans 380 residues: Probable protein phosphatase 2C 63 (380 aa).

A PPM-type phosphatase domain is found at Asp-35–Leu-338. Residues Asp-66, Gly-67, Asp-270, and Asp-329 each contribute to the Mn(2+) site.

The protein belongs to the PP2C family. The cofactor is Mg(2+). Requires Mn(2+) as cofactor.

The catalysed reaction is O-phospho-L-seryl-[protein] + H2O = L-seryl-[protein] + phosphate. The enzyme catalyses O-phospho-L-threonyl-[protein] + H2O = L-threonyl-[protein] + phosphate. May dephosphorylate and repress plasma membrane H(+)-ATPases (PM H(+)-ATPases, e.g. AHA1 and AHA2), thus influencing negatively plant growth and fitness. The chain is Probable protein phosphatase 2C 63 from Arabidopsis thaliana (Mouse-ear cress).